Here is an 86-residue protein sequence, read N- to C-terminus: MGFSELFTNADGRLSTTASIQFWGFVAATGVLLYSVYLDKPYVPEMFSTFLFACVGTAATKGVANALSQRREQGKEQGREQGREQE.

2 consecutive transmembrane segments (helical) span residues 20 to 38 and 47 to 63; these read IQFWGFVAATGVLLYSVYL and FSTFLFACVGTAATKGV. The segment at 67–86 is disordered; sequence LSQRREQGKEQGREQGREQE. Basic and acidic residues predominate over residues 69–86; sequence QRREQGKEQGREQGREQE.

Its subcellular location is the cell membrane. This is an uncharacterized protein from Haemophilus influenzae (strain ATCC 51907 / DSM 11121 / KW20 / Rd).